Here is a 91-residue protein sequence, read N- to C-terminus: UPF0250 protein mma_3250 (91 aa).

It belongs to the UPF0250 family.

The chain is UPF0250 protein mma_3250 from Janthinobacterium sp. (strain Marseille) (Minibacterium massiliensis).